Reading from the N-terminus, the 120-residue chain is NADH-ubiquinone oxidoreductase chain 3 (120 aa).

3 consecutive transmembrane segments (helical) span residues 8 to 28, 63 to 83, and 90 to 110; these read YFIL…ISLL, FYLV…LFPW, and ISYF…IGFI.

This sequence belongs to the complex I subunit 3 family.

It is found in the mitochondrion membrane. The enzyme catalyses a ubiquinone + NADH + 5 H(+)(in) = a ubiquinol + NAD(+) + 4 H(+)(out). Its function is as follows. Core subunit of the mitochondrial membrane respiratory chain NADH dehydrogenase (Complex I) that is believed to belong to the minimal assembly required for catalysis. Complex I functions in the transfer of electrons from NADH to the respiratory chain. The immediate electron acceptor for the enzyme is believed to be ubiquinone. The protein is NADH-ubiquinone oxidoreductase chain 3 (ND3) of Cyanidium caldarium (Red alga).